Consider the following 155-residue polypeptide: Phospholipase A2 A2-actitoxin-Ucs2a (155 aa).

The first 19 residues, 1-19, serve as a signal peptide directing secretion; sequence MKNNIILVILLGISVFVDC. Residues 20–42 constitute a propeptide that is removed on maturation; it reads LPLNDQEEDKSLNAQESEVSAVQ. 6 disulfides stabilise this stretch: cysteine 55–cysteine 118, cysteine 71–cysteine 87, cysteine 86–cysteine 143, cysteine 93–cysteine 136, cysteine 100–cysteine 129, and cysteine 122–cysteine 134. Residues glycine 72 and glycine 74 each contribute to the Ca(2+) site. Histidine 90 is an active-site residue. Residue aspartate 91 participates in Ca(2+) binding. Residue aspartate 137 is part of the active site.

It belongs to the phospholipase A2 family. It depends on Ca(2+) as a cofactor.

It localises to the secreted. It is found in the nematocyst. It catalyses the reaction a 1,2-diacyl-sn-glycero-3-phosphocholine + H2O = a 1-acyl-sn-glycero-3-phosphocholine + a fatty acid + H(+). Its function is as follows. PLA2 catalyzes the calcium-dependent hydrolysis of the 2-acyl groups in 3-sn-phosphoglycerides. This chain is Phospholipase A2 A2-actitoxin-Ucs2a, found in Urticina crassicornis (Mottled anemone).